The chain runs to 346 residues: DNA-directed RNA polymerases I and III subunit RPAC1 (346 aa).

An N-acetylalanine modification is found at A2.

This sequence belongs to the archaeal Rpo3/eukaryotic RPB3 RNA polymerase subunit family. In terms of assembly, component of the RNA polymerase I and RNA polymerase III complexes consisting of at least 13 and 17 subunits, respectively. Pol I complex consists of a ten-subunit catalytic core composed of POLR1A/RPA1, POLR1B/RPA2, POLR1C/RPAC1, POLR1D/RPAC2, POLR1H/RPA12, POLR2E/RPABC1, POLR2F/RPABC2, POLR2H/RPABC3, POLR2K/RPABC4 and POLR2L/RPABC5; a mobile stalk subunit POLR1F/RPA43 protruding from the core and additional subunits homologous to general transcription factors POLR1E/RPA49 and POLR1G/RPA34. Part of Pol I pre-initiation complex (PIC), in which Pol I core assembles with RRN3 and promoter-bound UTBF and SL1/TIF-IB complex. Pol III complex consists of a ten-subunit catalytic core composed of POLR3A/RPC1, POLR3B/RPC2, POLR1C/RPAC1, POLR1D/RPAC2, POLR3K/RPC10, POLR2E/RPABC1, POLR2F/RPABC2, POLR2H/RPABC3, POLR2K/RPABC4 and POLR2L/RPABC5; a mobile stalk composed of two subunits POLR3H/RPC8 and CRCP/RPC9, protruding from the core and functioning primarily in transcription initiation; and additional subunits homologous to general transcription factors of the RNA polymerase II machinery, POLR3C/RPC3-POLR3F/RPC6-POLR3G/RPC7 heterotrimer required for transcription initiation and POLR3D/RPC4-POLR3E/RPC5 heterodimer involved in both transcription initiation and termination.

The protein resides in the nucleus. The protein localises to the cytoplasm. It is found in the cytosol. In terms of biological role, DNA-dependent RNA polymerase catalyzes the transcription of DNA into RNA using the four ribonucleoside triphosphates as substrates. Common component of RNA polymerases I and III which synthesize ribosomal RNA precursors and short non-coding RNAs including 5S rRNA, snRNAs, tRNAs and miRNAs, respectively. POLR1C/RPAC1 is part of the polymerase core and may function as a clamp element that moves to open and close the cleft. The protein is DNA-directed RNA polymerases I and III subunit RPAC1 of Mus musculus (Mouse).